Reading from the N-terminus, the 145-residue chain is MSKPIYVLSGPNLNLLGTREPEIYGHQTLDDVRRLCEARAKSLGREIVFRQSNHEGELIDWIQEAREKACALVINPAGYGHTSVAILDALKAVGLPVVECHLSNPAARETFRRKTYVSLAATGVVSGFGAASYELAVEAAAGLAR.

The active-site Proton acceptor is the Y24. The substrate site is built by N75, H81, and D88. H101 serves as the catalytic Proton donor. Substrate is bound by residues 102 to 103 (LS) and R112.

It belongs to the type-II 3-dehydroquinase family. As to quaternary structure, homododecamer.

The enzyme catalyses 3-dehydroquinate = 3-dehydroshikimate + H2O. The protein operates within metabolic intermediate biosynthesis; chorismate biosynthesis; chorismate from D-erythrose 4-phosphate and phosphoenolpyruvate: step 3/7. In terms of biological role, catalyzes a trans-dehydration via an enolate intermediate. The polypeptide is 3-dehydroquinate dehydratase (Phenylobacterium zucineum (strain HLK1)).